A 662-amino-acid chain; its full sequence is Polyunsaturated fatty acid (12S)/(13S)-lipoxygenase, epidermal-type (662 aa).

Residues 2–114 (VKYKILVATG…TICLTEGTAL (113 aa)) enclose the PLAT domain. One can recognise a Lipoxygenase domain in the interval 115-662 (KVTDDTQNLF…PSLVENSVTI (548 aa)). Fe cation is bound by residues histidine 360, histidine 365, histidine 540, and isoleucine 662.

This sequence belongs to the lipoxygenase family. Fe cation is required as a cofactor. In terms of tissue distribution, expressed in epidermis.

It is found in the cytoplasm. It carries out the reaction (5Z,8Z,11Z,14Z)-eicosatetraenoate + O2 = (12S)-hydroperoxy-(5Z,8Z,10E,14Z)-eicosatetraenoate. The enzyme catalyses 1-O-methyl-(9Z,12Z)-octadecadienoate + O2 = 1-O-methyl-(13S)-hydroperoxy-(9Z,11E)-octadecadienoate. The catalysed reaction is (8Z,11Z,14Z)-eicosatrienoate + O2 = (12S)-hydroperoxy-(8Z,10E,14Z)-eicosatrienoate. It catalyses the reaction (5Z,8Z,11Z)-eicosatrienoate + O2 = (12S)-hydroperoxy-(5Z,8Z,10E)-eicosatrienoate. It carries out the reaction 1-O-methyl-(5Z,8Z,11Z,14Z)-eicosatetraenoate + O2 = 1-O-methyl-(12S)-hydroperoxy-(5Z,8Z,10E,14Z)-eicosatetraenoate. The enzyme catalyses (9Z,12Z)-octadecadienoate + O2 = (13S)-hydroperoxy-(9Z,11E)-octadecadienoate. The catalysed reaction is (4Z,7Z,10Z,13Z,16Z,19Z)-docosahexaenoate + O2 = (14S)-hydroperoxy-(4Z,7Z,10Z,12E,16Z,19Z)-docosahexaenoate. The protein operates within lipid metabolism; hydroperoxy eicosatetraenoic acid biosynthesis. With respect to regulation, arachidonate 12-lipoxygenase activity is decreased when the pH decreases from 7.4 to 6.0. Functionally, catalyzes the regio and stereo-specific incorporation of a single molecule of dioxygen into free and esterified polyunsaturated fatty acids generating lipid hydroperoxides that can be further reduced to the corresponding hydroxy species. Shows increasing catalytic activity within the series arachidonic acid &lt; 5,8,11-eicosatrienoic acid &lt; linoleic acid &lt; 8,11,14-eicosatrienoic acid. This chain is Polyunsaturated fatty acid (12S)/(13S)-lipoxygenase, epidermal-type, found in Mus musculus (Mouse).